Consider the following 475-residue polypeptide: Ribulose bisphosphate carboxylase large chain (475 aa).

A propeptide spanning residues 1–2 (MS) is cleaved from the precursor. An N-acetylproline modification is found at Pro-3. Lys-14 is subject to N6,N6,N6-trimethyllysine. The substrate site is built by Asn-123 and Thr-173. The active-site Proton acceptor is Lys-175. Lys-177 contributes to the substrate binding site. 3 residues coordinate Mg(2+): Lys-201, Asp-203, and Glu-204. At Lys-201 the chain carries N6-carboxylysine. Catalysis depends on His-294, which acts as the Proton acceptor. Residues Arg-295, His-327, and Ser-379 each coordinate substrate.

Belongs to the RuBisCO large chain family. Type I subfamily. As to quaternary structure, heterohexadecamer of 8 large chains and 8 small chains; disulfide-linked. The disulfide link is formed within the large subunit homodimers. Mg(2+) serves as cofactor. In terms of processing, the disulfide bond which can form in the large chain dimeric partners within the hexadecamer appears to be associated with oxidative stress and protein turnover.

The protein localises to the plastid. The protein resides in the chloroplast. It carries out the reaction 2 (2R)-3-phosphoglycerate + 2 H(+) = D-ribulose 1,5-bisphosphate + CO2 + H2O. It catalyses the reaction D-ribulose 1,5-bisphosphate + O2 = 2-phosphoglycolate + (2R)-3-phosphoglycerate + 2 H(+). In terms of biological role, ruBisCO catalyzes two reactions: the carboxylation of D-ribulose 1,5-bisphosphate, the primary event in carbon dioxide fixation, as well as the oxidative fragmentation of the pentose substrate in the photorespiration process. Both reactions occur simultaneously and in competition at the same active site. In Amaranthus tricolor (Joseph's coat), this protein is Ribulose bisphosphate carboxylase large chain.